Here is a 326-residue protein sequence, read N- to C-terminus: rRNA 2'-O-methyltransferase fibrillarin (326 aa).

Residues 1 to 84 (MAFQPGSRGG…GGARGGAKGG (84 aa)) form a disordered region. The span at 7–83 (SRGGRGGARG…RGGARGGAKG (77 aa)) shows a compositional bias: gly residues. An asymmetric dimethylarginine mark is found at Arg8, Arg11, Arg15, Arg19, Arg23, Arg26, Arg32, Arg36, Arg39, Arg45, Arg49, Arg55, Arg59, Arg63, Arg67, Arg71, Arg74, and Arg78. S-adenosyl-L-methionine is bound by residues 180-181 (TS), 199-200 (EF), 224-225 (DA), and 244-247 (DVAQ).

The protein belongs to the methyltransferase superfamily. Fibrillarin family. In terms of assembly, component of box C/D small nucleolar ribonucleoprotein (snoRNP) particles that contain SNU13, NOP1, SIK1/NOP56 and NOP58, plus a guide RNA. In terms of processing, by homology to other fibrillarins, some or all of the N-terminal domain arginines are modified to asymmetric dimethylarginine (DMA).

It is found in the nucleus. Its subcellular location is the nucleolus. It catalyses the reaction L-glutaminyl-[histone H2A] + S-adenosyl-L-methionine = N(5)-methyl-L-glutaminyl-[histone H2A] + S-adenosyl-L-homocysteine + H(+). S-adenosyl-L-methionine-dependent methyltransferase that has the ability to methylate both RNAs and proteins. Involved in pre-rRNA processing. Utilizes the methyl donor S-adenosyl-L-methionine to catalyze the site-specific 2'-hydroxyl methylation of ribose moieties in pre-ribosomal RNA. Site specificity is provided by a guide RNA that base pairs with the substrate. Methylation occurs at a characteristic distance from the sequence involved in base pairing with the guide RNA. Also acts as a protein methyltransferase by mediating methylation of 'Gln-105' of histone H2A (H2AQ105me), a modification that impairs binding of the FACT complex and is specifically present at 35S ribosomal DNA locus. In Eremothecium gossypii (strain ATCC 10895 / CBS 109.51 / FGSC 9923 / NRRL Y-1056) (Yeast), this protein is rRNA 2'-O-methyltransferase fibrillarin (NOP1).